A 374-amino-acid polypeptide reads, in one-letter code: UPF0754 membrane protein SAB1779c (374 aa).

2 helical membrane passes run 4 to 24 (LFII…TNVI) and 354 to 374 (SLGF…AIFV).

It belongs to the UPF0754 family.

The protein localises to the cell membrane. In Staphylococcus aureus (strain bovine RF122 / ET3-1), this protein is UPF0754 membrane protein SAB1779c.